A 68-amino-acid chain; its full sequence is Amphipathic peptide OcyC1 (68 aa).

Residues 1 to 23 form the signal peptide; the sequence is MKAQLCILLIALVLFQTFSQSDA. Phe-36 is subject to Phenylalanine amide. A propeptide spanning residues 38-68 is cleaved from the precursor; that stretch reads RRGLNDLDDLDELFDGEISQADVDFLNELMR.

It belongs to the non-disulfide-bridged peptide (NDBP) superfamily. Short antimicrobial peptide (group 4) family. As to expression, expressed by the venom gland.

Its subcellular location is the secreted. It is found in the target cell membrane. Functionally, antimicrobial peptide. Inhibits the growth of Gram-positive and Gram-negative bacteria. Shows antifungal activity with MIC values ranging from 12.5 to 25 uM. Also shows an inhibitory activity on C.albicans biofilms at high concentrations. Shows low cytotoxic activity and has weak hemolytic activity. This is Amphipathic peptide OcyC1 from Opisthacanthus cayaporum (South American scorpion).